The primary structure comprises 184 residues: Ribosome-recycling factor (184 aa).

The protein belongs to the RRF family.

It is found in the cytoplasm. In terms of biological role, responsible for the release of ribosomes from messenger RNA at the termination of protein biosynthesis. May increase the efficiency of translation by recycling ribosomes from one round of translation to another. The sequence is that of Ribosome-recycling factor from Aster yellows witches'-broom phytoplasma (strain AYWB).